The primary structure comprises 239 residues: Transcriptional regulatory protein BtsR (239 aa).

In terms of domain architecture, Response regulatory spans 3 to 116; that stretch reads KVLIVDDEPL…RLEKTLARLR (114 aa). Residue D54 is modified to 4-aspartylphosphate. Residues 137–239 enclose the HTH LytTR-type domain; sequence IPCTGHSRIY…LKSLKEAIGL (103 aa).

Post-translationally, phosphorylated by BtsS.

In terms of biological role, member of the two-component regulatory system BtsS/BtsR. BtsR regulates expression of btsT by binding to its promoter region. The sequence is that of Transcriptional regulatory protein BtsR from Escherichia coli O6:H1 (strain CFT073 / ATCC 700928 / UPEC).